A 346-amino-acid polypeptide reads, in one-letter code: Aspartate-semialdehyde dehydrogenase (346 aa).

Residues 12-15 (SGAV) and 40-41 (RS) contribute to the NADP(+) site. Position 101 (Arg-101) interacts with phosphate. Residue Cys-131 is the Acyl-thioester intermediate of the active site. Residue Gln-158 coordinates substrate. NADP(+) is bound at residue 161–162 (SG). Lys-225 contacts phosphate. Arg-246 contacts substrate. The Proton acceptor role is filled by His-253. Residue Gln-326 coordinates NADP(+).

The protein belongs to the aspartate-semialdehyde dehydrogenase family. Homodimer.

It catalyses the reaction L-aspartate 4-semialdehyde + phosphate + NADP(+) = 4-phospho-L-aspartate + NADPH + H(+). It functions in the pathway amino-acid biosynthesis; L-lysine biosynthesis via DAP pathway; (S)-tetrahydrodipicolinate from L-aspartate: step 2/4. Its pathway is amino-acid biosynthesis; L-methionine biosynthesis via de novo pathway; L-homoserine from L-aspartate: step 2/3. The protein operates within amino-acid biosynthesis; L-threonine biosynthesis; L-threonine from L-aspartate: step 2/5. In terms of biological role, catalyzes the NADPH-dependent formation of L-aspartate-semialdehyde (L-ASA) by the reductive dephosphorylation of L-aspartyl-4-phosphate. In Helicobacter pylori (strain J99 / ATCC 700824) (Campylobacter pylori J99), this protein is Aspartate-semialdehyde dehydrogenase.